Consider the following 405-residue polypeptide: Saccharopepsin (405 aa).

The first 22 residues, 1–22, serve as a signal peptide directing secretion; that stretch reads MFSLKALLPLALLLVSANQVAA. The propeptide at 23–76 is activation peptide; it reads KVHKAKIYKHELSDEMKEVTFEQHLAHLGQKYLTQFEKANPEVVFSREHPFFTE. In terms of domain architecture, Peptidase A1 spans 91–402; the sequence is YYTDITLGTP…DLGNNAVGLA (312 aa). The active site involves Asp-109. The cysteines at positions 122 and 127 are disulfide-linked. Asn-144 carries N-linked (GlcNAc...) asparagine glycosylation. Asp-294 is an active-site residue. Cys-328 and Cys-361 are joined by a disulfide. N-linked (GlcNAc...) asparagine glycosylation is present at Asn-345.

The protein belongs to the peptidase A1 family.

The protein resides in the vacuole. The catalysed reaction is Hydrolysis of proteins with broad specificity for peptide bonds. Cleaves -Leu-Leu-|-Val-Tyr- bond in a synthetic substrate. Does not act on esters of Tyr or Arg.. In terms of biological role, aspartyl protease implicated in the post-translational regulation of S.cerevisiae vacuolar proteinases. Acts on YSCB, on YSCY and on itself. The protein is Saccharopepsin (PEP4) of Saccharomyces cerevisiae (strain ATCC 204508 / S288c) (Baker's yeast).